We begin with the raw amino-acid sequence, 317 residues long: Ribosomal protein L11 methyltransferase (317 aa).

S-adenosyl-L-methionine contacts are provided by Thr158, Gly179, Asp201, and Asn244.

Belongs to the methyltransferase superfamily. PrmA family.

It localises to the cytoplasm. It carries out the reaction L-lysyl-[protein] + 3 S-adenosyl-L-methionine = N(6),N(6),N(6)-trimethyl-L-lysyl-[protein] + 3 S-adenosyl-L-homocysteine + 3 H(+). Functionally, methylates ribosomal protein L11. The chain is Ribosomal protein L11 methyltransferase from Streptococcus pyogenes serotype M6 (strain ATCC BAA-946 / MGAS10394).